A 119-amino-acid polypeptide reads, in one-letter code: NADH-quinone oxidoreductase subunit A (119 aa).

The next 3 membrane-spanning stretches (helical) occupy residues 9–29, 63–83, and 88–108; these read VLLF…LGYV, LVAI…PWAV, and VGGA…VGFV.

This sequence belongs to the complex I subunit 3 family. As to quaternary structure, NDH-1 is composed of 14 different subunits. Subunits NuoA, H, J, K, L, M, N constitute the membrane sector of the complex.

It localises to the cell inner membrane. It carries out the reaction a quinone + NADH + 5 H(+)(in) = a quinol + NAD(+) + 4 H(+)(out). In terms of biological role, NDH-1 shuttles electrons from NADH, via FMN and iron-sulfur (Fe-S) centers, to quinones in the respiratory chain. The immediate electron acceptor for the enzyme in this species is believed to be ubiquinone. Couples the redox reaction to proton translocation (for every two electrons transferred, four hydrogen ions are translocated across the cytoplasmic membrane), and thus conserves the redox energy in a proton gradient. In Delftia acidovorans (strain DSM 14801 / SPH-1), this protein is NADH-quinone oxidoreductase subunit A.